We begin with the raw amino-acid sequence, 913 residues long: DNA mismatch repair protein MutS (913 aa).

The interval 18-50 (NNKQKEKTKIPEDLSLEDLKKESQKRPRQRKNS) is disordered. A compositionally biased stretch (basic and acidic residues) spans 19–42 (NKQKEKTKIPEDLSLEDLKKESQK). 720 to 727 (GPNASGKS) provides a ligand contact to ATP.

It belongs to the DNA mismatch repair MutS family.

In terms of biological role, this protein is involved in the repair of mismatches in DNA. It is possible that it carries out the mismatch recognition step. This protein has a weak ATPase activity. This is DNA mismatch repair protein MutS from Prochlorococcus marinus (strain MIT 9301).